Consider the following 55-residue polypeptide: ATP synthase small subunit 6, mitochondrial (55 aa).

The N-terminal 15 residues, 1-15 (MRQFDPWPVFFRREW), are a transit peptide targeting the mitochondrion. A helical transmembrane segment spans residues 20 to 39 (PFLVGFAVTGAIITKMSLGF).

This sequence belongs to the ATPase 6 subunit family.

The protein localises to the mitochondrion inner membrane. Functionally, mitochondrial membrane ATP synthase (F(1)F(0) ATP synthase or Complex V) produces ATP from ADP in the presence of a proton gradient across the membrane which is generated by electron transport complexes of the respiratory chain. F-type ATPases consist of two structural domains, F(1) - containing the extramembraneous catalytic core and F(0) - containing the membrane proton channel, linked together by a central stalk and a peripheral stalk. During catalysis, ATP synthesis in the catalytic domain of F(1) is coupled via a rotary mechanism of the central stalk subunits to proton translocation. Part of the complex F(0) domain. Confers tolerance to several abiotic stresses (e.g. salt, mannitol, drought, oxidative and cold stresses), probably by providing additional energy needed for cell homeostasis. The chain is ATP synthase small subunit 6, mitochondrial from Solanum tuberosum (Potato).